A 934-amino-acid polypeptide reads, in one-letter code: Protein translocase subunit SecA (934 aa).

ATP-binding positions include Q87, 105 to 109 (GEGKT), and D515. Zn(2+) contacts are provided by C918, C920, C929, and H930.

Belongs to the SecA family. In terms of assembly, monomer and homodimer. Part of the essential Sec protein translocation apparatus which comprises SecA, SecYEG and auxiliary proteins SecDF-YajC and YidC. Zn(2+) is required as a cofactor.

It is found in the cell inner membrane. Its subcellular location is the cytoplasm. The catalysed reaction is ATP + H2O + cellular proteinSide 1 = ADP + phosphate + cellular proteinSide 2.. Functionally, part of the Sec protein translocase complex. Interacts with the SecYEG preprotein conducting channel. Has a central role in coupling the hydrolysis of ATP to the transfer of proteins into and across the cell membrane, serving both as a receptor for the preprotein-SecB complex and as an ATP-driven molecular motor driving the stepwise translocation of polypeptide chains across the membrane. This Ralstonia pickettii (strain 12J) protein is Protein translocase subunit SecA.